The chain runs to 452 residues: Caspase-2 (452 aa).

Alanine 2 carries the post-translational modification N-acetylalanine. Positions 2 to 169 (AASSGRSQSS…TMEHSLDNGD (168 aa)) are excised as a propeptide. The CARD domain occupies 32-121 (MHPDHQETLK…GHLEDLLLTT (90 aa)). The residue at position 157 (serine 157) is a Phosphoserine. Catalysis depends on residues histidine 277 and cysteine 320. Positions 326 to 333 (DRGVDQQD) are excised as a propeptide. Residues 327-336 (RGVDQQDGKN) are compositionally biased toward basic and acidic residues. The interval 327 to 349 (RGVDQQDGKNHAQSPGCEESDAG) is disordered. Serine 340 bears the Phosphoserine mark.

This sequence belongs to the peptidase C14A family. As to quaternary structure, heterotetramer that consists of two anti-parallel arranged heterodimers, each one formed by a p18 subunit and a p12 subunit. Forms a complex named the PIDDosome with PIDD1 and CRADD. Interacts with NOL3 (via CARD domain); inhibits CASP2 activity in a phosphorylation-dependent manner. Post-translationally, the mature protease can process its own propeptide, but not that of other caspases.

The catalysed reaction is Strict requirement for an Asp residue at P1, with 316-Asp being essential for proteolytic activity and has a preferred cleavage sequence of Val-Asp-Val-Ala-Asp-|-.. Functionally, involved in the activation cascade of caspases responsible for apoptosis execution. Might function by either activating some proteins required for cell death or inactivating proteins necessary for cell survival. Associates with PIDD1 and CRADD to form the PIDDosome, a complex that activates CASP2 and triggers apoptosis in response to genotoxic stress. The polypeptide is Caspase-2 (Casp2) (Rattus norvegicus (Rat)).